Reading from the N-terminus, the 83-residue chain is MRLFLSLPVLVVVLSIVLEGPAPAQGTPDVSSALDKLKEFGNTLEDKARELISRIKQNELSAKMREWFSETFQKVKEKLKIDS.

Positions 1 to 26 are cleaved as a signal peptide; that stretch reads MRLFLSLPVLVVVLSIVLEGPAPAQG.

It belongs to the apolipoprotein C1 family.

The protein resides in the secreted. Inhibitor of lipoprotein binding to the low density lipoprotein (LDL) receptor, LDL receptor-related protein, and very low density lipoprotein (VLDL) receptor. Associates with high density lipoproteins (HDL) and the triacylglycerol-rich lipoproteins in the plasma and makes up about 10% of the protein of the VLDL and 2% of that of HDL. Appears to interfere directly with fatty acid uptake and is also the major plasma inhibitor of cholesteryl ester transfer protein (CETP). Binds free fatty acids and reduces their intracellular esterification. Modulates the interaction of APOE with beta-migrating VLDL and inhibits binding of beta-VLDL to the LDL receptor-related protein. The polypeptide is Apolipoprotein C-I, basic form (APOC1B) (Pan troglodytes (Chimpanzee)).